A 197-amino-acid polypeptide reads, in one-letter code: Putative methyltransferase Mtx subunit A (197 aa).

It belongs to the MtrA family. May be part of a complex composed of 3 subunits; MtxA, MtxH and MtxX.

The chain is Putative methyltransferase Mtx subunit A (mtxA) from Methanosarcina barkeri (strain Fusaro / DSM 804).